We begin with the raw amino-acid sequence, 156 residues long: SsrA-binding protein (156 aa).

A disordered region spans residues 134-156 (RQTLREQQDKRESLRELRERNRR).

This sequence belongs to the SmpB family.

It localises to the cytoplasm. In terms of biological role, required for rescue of stalled ribosomes mediated by trans-translation. Binds to transfer-messenger RNA (tmRNA), required for stable association of tmRNA with ribosomes. tmRNA and SmpB together mimic tRNA shape, replacing the anticodon stem-loop with SmpB. tmRNA is encoded by the ssrA gene; the 2 termini fold to resemble tRNA(Ala) and it encodes a 'tag peptide', a short internal open reading frame. During trans-translation Ala-aminoacylated tmRNA acts like a tRNA, entering the A-site of stalled ribosomes, displacing the stalled mRNA. The ribosome then switches to translate the ORF on the tmRNA; the nascent peptide is terminated with the 'tag peptide' encoded by the tmRNA and targeted for degradation. The ribosome is freed to recommence translation, which seems to be the essential function of trans-translation. In Paenarthrobacter aurescens (strain TC1), this protein is SsrA-binding protein.